The chain runs to 132 residues: MVMTDPIADMLTRIRNANMVRHEKLEVPASKIKKEIAELLKREGFIRDVEYIEDNKQGILRIFLKYGANNERVITGLKRISKPGLRVYAKADEVPRVLNGLGIALVSTSKGVMTDKDARQLQTGGEVVAYVW.

It belongs to the universal ribosomal protein uS8 family. In terms of assembly, part of the 30S ribosomal subunit. Contacts proteins S5 and S12.

One of the primary rRNA binding proteins, it binds directly to 16S rRNA central domain where it helps coordinate assembly of the platform of the 30S subunit. This is Small ribosomal subunit protein uS8 from Bacillus anthracis (strain A0248).